Here is a 112-residue protein sequence, read N- to C-terminus: MHAIEHNIIKITPIFTYIDSREIGGYSYERFNRNLFKDKAVIFIYDGNEGGFGLAEILYENAEKLLNKSLEHLKNCNCADGCPLCIYSTKCGTFNEFLDKWQAIRILEKLLS.

This is an uncharacterized protein from Methanocaldococcus jannaschii (strain ATCC 43067 / DSM 2661 / JAL-1 / JCM 10045 / NBRC 100440) (Methanococcus jannaschii).